Reading from the N-terminus, the 264-residue chain is Thymidylate synthase (264 aa).

Arg21 contacts dUMP. His51 provides a ligand contact to (6R)-5,10-methylene-5,6,7,8-tetrahydrofolate. 126-127 (RR) lines the dUMP pocket. Cys146 functions as the Nucleophile in the catalytic mechanism. DUMP-binding positions include 166-169 (RSGD), Asn177, and 207-209 (HIY). Residue Asp169 participates in (6R)-5,10-methylene-5,6,7,8-tetrahydrofolate binding. Residue Ala263 participates in (6R)-5,10-methylene-5,6,7,8-tetrahydrofolate binding.

This sequence belongs to the thymidylate synthase family. Bacterial-type ThyA subfamily. In terms of assembly, homodimer.

It localises to the cytoplasm. The catalysed reaction is dUMP + (6R)-5,10-methylene-5,6,7,8-tetrahydrofolate = 7,8-dihydrofolate + dTMP. It functions in the pathway pyrimidine metabolism; dTTP biosynthesis. In terms of biological role, catalyzes the reductive methylation of 2'-deoxyuridine-5'-monophosphate (dUMP) to 2'-deoxythymidine-5'-monophosphate (dTMP) while utilizing 5,10-methylenetetrahydrofolate (mTHF) as the methyl donor and reductant in the reaction, yielding dihydrofolate (DHF) as a by-product. This enzymatic reaction provides an intracellular de novo source of dTMP, an essential precursor for DNA biosynthesis. In Sinorhizobium medicae (strain WSM419) (Ensifer medicae), this protein is Thymidylate synthase.